A 230-amino-acid chain; its full sequence is Phosphoribosylformylglycinamidine synthase subunit PurQ (230 aa).

One can recognise a Glutamine amidotransferase type-1 domain in the interval 2 to 230 (KIAVTKFLGT…KGMIDYAKRI (229 aa)). Cys85 serves as the catalytic Nucleophile. Residues His202 and Glu204 contribute to the active site.

In terms of assembly, part of the FGAM synthase complex composed of 1 PurL, 1 PurQ and 2 PurS subunits.

It localises to the cytoplasm. It carries out the reaction N(2)-formyl-N(1)-(5-phospho-beta-D-ribosyl)glycinamide + L-glutamine + ATP + H2O = 2-formamido-N(1)-(5-O-phospho-beta-D-ribosyl)acetamidine + L-glutamate + ADP + phosphate + H(+). The catalysed reaction is L-glutamine + H2O = L-glutamate + NH4(+). Its pathway is purine metabolism; IMP biosynthesis via de novo pathway; 5-amino-1-(5-phospho-D-ribosyl)imidazole from N(2)-formyl-N(1)-(5-phospho-D-ribosyl)glycinamide: step 1/2. Functionally, part of the phosphoribosylformylglycinamidine synthase complex involved in the purines biosynthetic pathway. Catalyzes the ATP-dependent conversion of formylglycinamide ribonucleotide (FGAR) and glutamine to yield formylglycinamidine ribonucleotide (FGAM) and glutamate. The FGAM synthase complex is composed of three subunits. PurQ produces an ammonia molecule by converting glutamine to glutamate. PurL transfers the ammonia molecule to FGAR to form FGAM in an ATP-dependent manner. PurS interacts with PurQ and PurL and is thought to assist in the transfer of the ammonia molecule from PurQ to PurL. The chain is Phosphoribosylformylglycinamidine synthase subunit PurQ from Methanocaldococcus jannaschii (strain ATCC 43067 / DSM 2661 / JAL-1 / JCM 10045 / NBRC 100440) (Methanococcus jannaschii).